A 300-amino-acid polypeptide reads, in one-letter code: PTB domain-containing engulfment adapter protein 1 (300 aa).

Residues 21–176 (AKHFIPYNAK…GGLQKRIQDL (156 aa)) form the PID domain. Residues 160–199 (VETRKQIGGLQKRIQDLETENVELKKQLQVLEEQLMIAQV) adopt a coiled-coil conformation.

It belongs to the ced-6 family.

The protein resides in the cytoplasm. Its function is as follows. May function as an adapter protein. Required for efficient phagocytosis of apoptotic cells. May play a role in the internalization and endosomal trafficking of various lrp1 ligands. The polypeptide is PTB domain-containing engulfment adapter protein 1 (gulp1) (Danio rerio (Zebrafish)).